The following is a 222-amino-acid chain: Ribose-5-phosphate isomerase A (222 aa).

Residues 28 to 31 (TGST), 81 to 84 (DGAD), and 94 to 97 (KGGG) contribute to the substrate site. The active-site Proton acceptor is the glutamate 103. Substrate is bound at residue lysine 121.

It belongs to the ribose 5-phosphate isomerase family. Homodimer.

It catalyses the reaction aldehydo-D-ribose 5-phosphate = D-ribulose 5-phosphate. It functions in the pathway carbohydrate degradation; pentose phosphate pathway; D-ribose 5-phosphate from D-ribulose 5-phosphate (non-oxidative stage): step 1/1. Catalyzes the reversible conversion of ribose-5-phosphate to ribulose 5-phosphate. The protein is Ribose-5-phosphate isomerase A of Azoarcus sp. (strain BH72).